Reading from the N-terminus, the 489-residue chain is Squalene monooxygenase (489 aa).

A helical membrane pass occupies residues 10–30 (VTYDALIVGAGVIGPCVATAL). Residues 21–22 (VI), 41–42 (ER), Arg-49, Arg-151, Val-167, Asp-328, and Met-341 each bind FAD. 2 helical membrane passes run 426–446 (FLAG…AVAF) and 464–484 (ALLE…PFLV).

It belongs to the squalene monooxygenase family. Requires FAD as cofactor.

It is found in the microsome membrane. It localises to the endoplasmic reticulum membrane. It carries out the reaction squalene + reduced [NADPH--hemoprotein reductase] + O2 = (S)-2,3-epoxysqualene + oxidized [NADPH--hemoprotein reductase] + H2O + H(+). The protein operates within terpene metabolism; lanosterol biosynthesis; lanosterol from farnesyl diphosphate: step 2/3. Functionally, catalyzes the stereospecific oxidation of squalene to (S)-2,3-epoxysqualene, and is considered to be a rate-limiting enzyme in steroid biosynthesis. The protein is Squalene monooxygenase (ERG1) of Candida glabrata (strain ATCC 2001 / BCRC 20586 / JCM 3761 / NBRC 0622 / NRRL Y-65 / CBS 138) (Yeast).